Consider the following 520-residue polypeptide: Cytochrome P450 monooxygenase btcC (520 aa).

Residues 2–22 (IFLLTLAGLKVLSIVILFGII) form a helical membrane-spanning segment. N-linked (GlcNAc...) asparagine glycosylation is present at asparagine 177. Cysteine 448 contacts heme. N-linked (GlcNAc...) asparagine glycosylation occurs at asparagine 511.

Belongs to the cytochrome P450 family. Heme serves as cofactor.

The protein localises to the membrane. It participates in secondary metabolite biosynthesis; terpenoid biosynthesis. Functionally, cytochrome P4590 monooxygenase part of the gene cluster that mediates the biosynthesis of betaestacins. The bifunctional terpene synthase btcA converts isopentenyl diphosphate (IPP) and dimethylallyl diphosphate (DMAPP) into the sesterterpene betaestacin I. The C-terminal prenyltransferase (PT) domain of btcA catalyzes formation of GFPP, whereas the N-terminal terpene cyclase (TC) domain catalyzes the cyclization of GFPP into betaestacin I. The cytochrome P450 monooxygenase btcB oxidizes the C25 methyl group of betaestacin I to yield the carboxylic acid betaestacin IV via the alcohol betaestacin III. The cytochrome P450 monooxygenase btcC further catalyzes the multistep oxidation of betaestacin IV to produce several compounds, including betaestacins Va, Vb, Vc and VI. This Colletotrichum orbiculare (strain 104-T / ATCC 96160 / CBS 514.97 / LARS 414 / MAFF 240422) (Cucumber anthracnose fungus) protein is Cytochrome P450 monooxygenase btcC.